The chain runs to 538 residues: UNC93-like protein (538 aa).

An N-linked (GlcNAc...) asparagine glycan is attached at Asn45. 5 helical membrane passes run 46–66 (ISIISIAFMVQFTAFQGTANL), 80–100 (SLSAIYAALVVSCIFLPTLII), 105–125 (VKWTLVCSMLCYAPYIAFQLF), 128–148 (FYTLVPAGILVGMGAAPMWAS), and 170–190 (AIIVRFFGFFFLAWQSAELWG). N-linked (GlcNAc...) asparagine glycosylation occurs at Asn210. 7 consecutive transmembrane segments (helical) span residues 244 to 264 (IFEISMIYLSCIVAAVCIIAF), 305 to 325 (LLIPITVFIGMEQAFIGADFT), 338 to 358 (IGFVMICFGVVNALCSILFGS), 366 to 386 (TPIIVLGAVVHFTLITVELFW), 394 to 414 (IIFYAMSGLWGVGDAVWQTQI), 435 to 455 (LWESAGFVIAYAYATTLCTQM), and 457 to 477 (LYILLAVLTLGCIGYVIVEIL).

It belongs to the unc-93 family.

It localises to the membrane. The chain is UNC93-like protein from Drosophila melanogaster (Fruit fly).